The primary structure comprises 222 residues: ATP synthase F(0) complex subunit a (222 aa).

6 helical membrane-spanning segments follow: residues Ala-7–Leu-27, Trp-64–Leu-84, Gln-93–Phe-113, Phe-132–Leu-152, Ile-160–Ile-180, and Ile-185–Ile-205.

The protein belongs to the ATPase A chain family. As to quaternary structure, component of the ATP synthase complex composed at least of ATP5F1A/subunit alpha, ATP5F1B/subunit beta, ATP5MC1/subunit c (homooctomer), MT-ATP6/subunit a, MT-ATP8/subunit 8, ATP5ME/subunit e, ATP5MF/subunit f, ATP5MG/subunit g, ATP5MK/subunit k, ATP5MJ/subunit j, ATP5F1C/subunit gamma, ATP5F1D/subunit delta, ATP5F1E/subunit epsilon, ATP5PF/subunit F6, ATP5PB/subunit b, ATP5PD/subunit d, ATP5PO/subunit OSCP. ATP synthase complex consists of a soluble F(1) head domain (subunits alpha(3) and beta(3)) - the catalytic core - and a membrane F(0) domain - the membrane proton channel (subunits c, a, 8, e, f, g, k and j). These two domains are linked by a central stalk (subunits gamma, delta, and epsilon) rotating inside the F1 region and a stationary peripheral stalk (subunits F6, b, d, and OSCP). Interacts with DNAJC30; interaction is direct.

It is found in the mitochondrion inner membrane. The enzyme catalyses H(+)(in) = H(+)(out). Subunit a, of the mitochondrial membrane ATP synthase complex (F(1)F(0) ATP synthase or Complex V) that produces ATP from ADP in the presence of a proton gradient across the membrane which is generated by electron transport complexes of the respiratory chain. ATP synthase complex consist of a soluble F(1) head domain - the catalytic core - and a membrane F(1) domain - the membrane proton channel. These two domains are linked by a central stalk rotating inside the F(1) region and a stationary peripheral stalk. During catalysis, ATP synthesis in the catalytic domain of F(1) is coupled via a rotary mechanism of the central stalk subunits to proton translocation. With the subunit c (ATP5MC1), forms the proton-conducting channel in the F(0) domain, that contains two crucial half-channels (inlet and outlet) that facilitate proton movement from the mitochondrial intermembrane space (IMS) into the matrix. Protons are taken up via the inlet half-channel and released through the outlet half-channel, following a Grotthuss mechanism. The sequence is that of ATP synthase F(0) complex subunit a from Mammuthus primigenius (Siberian woolly mammoth).